Here is a 141-residue protein sequence, read N- to C-terminus: Nucleoside diphosphate kinase (141 aa).

ATP contacts are provided by lysine 11, phenylalanine 59, arginine 87, threonine 93, arginine 104, and asparagine 114. Histidine 117 acts as the Pros-phosphohistidine intermediate in catalysis.

It belongs to the NDK family. Homotetramer. Mg(2+) is required as a cofactor.

The protein resides in the cytoplasm. The catalysed reaction is a 2'-deoxyribonucleoside 5'-diphosphate + ATP = a 2'-deoxyribonucleoside 5'-triphosphate + ADP. It carries out the reaction a ribonucleoside 5'-diphosphate + ATP = a ribonucleoside 5'-triphosphate + ADP. Functionally, major role in the synthesis of nucleoside triphosphates other than ATP. The ATP gamma phosphate is transferred to the NDP beta phosphate via a ping-pong mechanism, using a phosphorylated active-site intermediate. The chain is Nucleoside diphosphate kinase from Stenotrophomonas maltophilia (strain R551-3).